A 126-amino-acid polypeptide reads, in one-letter code: MKFDVCVPILGFENVKEVTLEKIDDAFMRMESSNDEHISFTLINPFALREYDFEIPDATQKLLEIDEKSNILILNIAIIQTPVEDTVVNFIGPMIFNTDNNKAAQLVLSESTKYGVAEKISLYLKK.

This sequence belongs to the FliW family. As to quaternary structure, interacts with translational regulator CsrA and flagellin(s).

The protein resides in the cytoplasm. Functionally, acts as an anti-CsrA protein, binds CsrA and prevents it from repressing translation of its target genes, one of which is flagellin. Binds to flagellin and participates in the assembly of the flagellum. This is Flagellar assembly factor FliW from Sulfurimonas denitrificans (strain ATCC 33889 / DSM 1251) (Thiomicrospira denitrificans (strain ATCC 33889 / DSM 1251)).